The following is a 294-amino-acid chain: MKSFVFFAACFAIVALNSLAHAYPQKLPVPIPPPTNPPVAAFHNSVATNSKGGQDVSVKLAATNLGNKHVQPIAEVFAKGNTQGGNVLRGATVGVQGHGLGASVTKTQDGIAESFRKQAEANLRLGDSASLIGKVSQTDTKIKGIDFKPQLSSSSLALQGDRLGASISRDVNRGVSDTLTKSISANVFRNDNHNLDASVFRSDVRQNNGFNFQKTGGMLDYSHANGHGLNAGLTRFSGIGNQANVGGYSTLFRSNDGLTSLKANAGGSQWLSGPFANQRDYSFGLGLSHNAWRG.

Residues 1–22 (MKSFVFFAACFAIVALNSLAHA) form the signal peptide. Positions 23–24 (YP) are cleaved as a propeptide — removed by a dipeptidylpeptidase. At Q25 the chain carries Pyrrolidone carboxylic acid. Position 293 is an arginine amide (R293).

It belongs to the attacin/sarcotoxin-2 family. Synthesized by the fat body and is eventually secreted into the hemolymph.

The protein localises to the secreted. Functionally, sarcotoxin II is an antibacterial protein which plays a role in the inflammatory response of this insect. The main effect of sarcotoxin II on E.coli may be the inhibition of cell wall synthesis, including septum formation. The polypeptide is Sarcotoxin II-2 (Sarcophaga peregrina (Flesh fly)).